Reading from the N-terminus, the 138-residue chain is Large ribosomal subunit protein uL16c (138 aa).

It belongs to the universal ribosomal protein uL16 family. As to quaternary structure, part of the 50S ribosomal subunit.

The protein resides in the plastid. Its subcellular location is the chloroplast. This is Large ribosomal subunit protein uL16c from Phaeodactylum tricornutum (strain CCAP 1055/1).